A 170-amino-acid chain; its full sequence is uncharacterized protein (170 aa).

Helical transmembrane passes span 6 to 26 (PFYF…ILLI), 31 to 51 (LLFI…LIYI), and 91 to 111 (IYFS…IVAF).

The protein to M.jannaschii MJ1249.1, MJ0210.1 and MJ0785.1.

It localises to the cell membrane. This is an uncharacterized protein from Methanocaldococcus jannaschii (strain ATCC 43067 / DSM 2661 / JAL-1 / JCM 10045 / NBRC 100440) (Methanococcus jannaschii).